The sequence spans 123 residues: Putative membrane protein insertion efficiency factor (123 aa).

The interval 1 to 23 is disordered; sequence MGSCGGKHTGKGAPKPYSRNFTD.

This sequence belongs to the UPF0161 family.

The protein resides in the cell inner membrane. Its function is as follows. Could be involved in insertion of integral membrane proteins into the membrane. The polypeptide is Putative membrane protein insertion efficiency factor (Brucella abortus (strain 2308)).